We begin with the raw amino-acid sequence, 538 residues long: Cytochrome P450 monooxygenase verH (538 aa).

A helical membrane pass occupies residues 2–21 (VFAMLVVCWSIFLGLWMLVS). C445 is a binding site for heme.

The protein belongs to the cytochrome P450 family. Heme serves as cofactor.

It is found in the membrane. Its pathway is secondary metabolite biosynthesis; terpenoid biosynthesis. It functions in the pathway mycotoxin biosynthesis. Cytochrome P450 monooxygenase; part of the gene cluster that mediates the biosynthesis of the neurotoxin verrucosidin, a methylated alpha-pyrone polyketide that inhibits oxidative phosphorylation in mitochondria and thereby causes neurological diseases. The carbon backbone of verrucosidin is synthesized by the HR-PKS verA, and further modified by the other verrucodidin cluster enzymes. This Penicillium polonicum protein is Cytochrome P450 monooxygenase verH.